A 337-amino-acid polypeptide reads, in one-letter code: CMP-sialic acid transporter (337 aa).

The Cytoplasmic portion of the chain corresponds to 1-9 (MAAPRDNVT). The helical transmembrane segment at 10–30 (LLFKLYCLAVMTLMAAVYTIA) threads the bilayer. The Lumenal portion of the chain corresponds to 31-45 (LRYTRTSDKELYFST). The chain crosses the membrane as a helical span at residues 46–64 (TAVCITEVIKLLLSVGILA). Lysine 55 is a CMP-N-acetyl-beta-neuraminate binding site. Over 65 to 87 (KETGSLGRFKASLRENVLGSPKE) the chain is Cytoplasmic. Residues 88-108 (LLKLSVPSLVYAVQNNMAFLA) form a helical membrane-spanning segment. 101-102 (QN) is a CMP-N-acetyl-beta-neuraminate binding site. Over 109–114 (LSNLDA) the chain is Lumenal. Residues 115-135 (AVYQVTYQLKIPCTALCTVLM) traverse the membrane as a helical segment. 117–124 (YQVTYQLK) contributes to the CMP-N-acetyl-beta-neuraminate binding site. Over 136–141 (LNRTLS) the chain is Cytoplasmic. A helical membrane pass occupies residues 142–160 (KLQWVSVFMLCAGVTLVQW). Residues 161–175 (KPAQATKVVVEQNPL) are Lumenal-facing. The helical transmembrane segment at 176 to 196 (LGFGAIAIAVLCSGFAGVYFE) threads the bilayer. Residue serine 188 participates in CMP-N-acetyl-beta-neuraminate binding. The Cytoplasmic portion of the chain corresponds to 197–209 (KVLKSSDTSLWVR). Residue 210–214 (NIQMY) participates in CMP-N-acetyl-beta-neuraminate binding. A helical membrane pass occupies residues 210 to 228 (NIQMYLSGIIVTLAGVYLS). Residues 229–243 (DGAEIKEKGFFYGYT) lie on the Lumenal side of the membrane. The chain crosses the membrane as a helical span at residues 244–262 (YYVWFVIFLASVGGLYTSV). Over 263-269 (VVKYTDN) the chain is Cytoplasmic. The helical transmembrane segment at 270 to 288 (IMKGFSAAAAIVLSTIASV) threads the bilayer. CMP-N-acetyl-beta-neuraminate is bound at residue lysine 272. The Lumenal segment spans residues 289 to 296 (MLFGLQIT). A helical membrane pass occupies residues 297 to 315 (LTFALGTLLVCVSIYLYGL). Residues 316–337 (PRQDTTSIQQGETASKERVIGV) are Cytoplasmic-facing. The tract at residues 316 to 337 (PRQDTTSIQQGETASKERVIGV) is disordered.

Belongs to the nucleotide-sugar transporter family. SLC35A subfamily. In terms of assembly, monomer.

The protein localises to the golgi apparatus membrane. Its subcellular location is the golgi apparatus. It catalyses the reaction CMP-N-acetyl-beta-neuraminate(in) + CMP(out) = CMP-N-acetyl-beta-neuraminate(out) + CMP(in). The catalysed reaction is CMP-N-acetyl-beta-neuraminate(in) + AMP(out) = CMP-N-acetyl-beta-neuraminate(out) + AMP(in). The enzyme catalyses CDP-L-ribitol(in) + CDP(out) = CDP-L-ribitol(out) + CDP(in). It carries out the reaction UMP(out) + CMP-N-acetyl-beta-neuraminate(in) = UMP(in) + CMP-N-acetyl-beta-neuraminate(out). In terms of biological role, transports CMP-sialic acid from the cytosol into the Golgi apparatus, functioning as an antiporter that exchanges CMP-sialic acid for CMP. Binds both CMP-sialic acid and free CMP, but has higher affinity for free CMP. Also able to exchange CMP-sialic acid for AMP and UMP. Also mediates the transport of CDP-ribitol. The sequence is that of CMP-sialic acid transporter from Homo sapiens (Human).